The following is a 361-amino-acid chain: Queuine tRNA-ribosyltransferase (361 aa).

The active-site Proton acceptor is Asp92. Substrate is bound by residues 92-96, Asp146, Gln189, and Gly216; that span reads DSGGF. Residues 247 to 253 form an RNA binding region; that stretch reads GVGKPVD. Asp266 acts as the Nucleophile in catalysis. Positions 271–275 are RNA binding; important for wobble base 34 recognition; sequence TRSGR. 4 residues coordinate Zn(2+): Cys304, Cys306, Cys309, and His335.

It belongs to the queuine tRNA-ribosyltransferase family. As to quaternary structure, homodimer. Within each dimer, one monomer is responsible for RNA recognition and catalysis, while the other monomer binds to the replacement base PreQ1. It depends on Zn(2+) as a cofactor.

It catalyses the reaction 7-aminomethyl-7-carbaguanine + guanosine(34) in tRNA = 7-aminomethyl-7-carbaguanosine(34) in tRNA + guanine. The protein operates within tRNA modification; tRNA-queuosine biosynthesis. Catalyzes the base-exchange of a guanine (G) residue with the queuine precursor 7-aminomethyl-7-deazaguanine (PreQ1) at position 34 (anticodon wobble position) in tRNAs with GU(N) anticodons (tRNA-Asp, -Asn, -His and -Tyr). Catalysis occurs through a double-displacement mechanism. The nucleophile active site attacks the C1' of nucleotide 34 to detach the guanine base from the RNA, forming a covalent enzyme-RNA intermediate. The proton acceptor active site deprotonates the incoming PreQ1, allowing a nucleophilic attack on the C1' of the ribose to form the product. After dissociation, two additional enzymatic reactions on the tRNA convert PreQ1 to queuine (Q), resulting in the hypermodified nucleoside queuosine (7-(((4,5-cis-dihydroxy-2-cyclopenten-1-yl)amino)methyl)-7-deazaguanosine). The sequence is that of Queuine tRNA-ribosyltransferase from Rickettsia africae (strain ESF-5).